Here is a 290-residue protein sequence, read N- to C-terminus: UBX domain-containing protein 1-B (290 aa).

Residues 1 to 42 form the UBA domain; that stretch reads MADCSALESLIEMGFSPSRAEKALSATGNQGIEPAMDWLVEH. The segment at 49–210 is disordered; it reads KEPSVVIPED…VQEPPTKKEY (162 aa). 2 stretches are compositionally biased toward basic and acidic residues: residues 80–117 and 132–172; these read PLTE…EQEK and RMQE…DRAR. Positions 81-171 form a coiled coil; the sequence is LTEEEKEKQT…KIARDKADRA (91 aa). Positions 185–201 are enriched in low complexity; that stretch reads PAETSVPATAPSPSSPV. One can recognise a UBX domain in the interval 208–287; that stretch reads KEYDQCRIQV…GLVPTAVLIV (80 aa).

The protein localises to the cytoplasm. In terms of biological role, component of a complex required to couple deglycosylation and proteasome-mediated degradation of misfolded proteins in the endoplasmic reticulum that are retrotranslocated in the cytosol. Involved in ubiquitin-proteasome systems. In Xenopus laevis (African clawed frog), this protein is UBX domain-containing protein 1-B (ubxn1-b).